A 350-amino-acid polypeptide reads, in one-letter code: SUMO-activating enzyme subunit 1 (350 aa).

M1 is subject to N-acetylmethionine. V2 carries the N-acetylvaline; in SUMO-activating enzyme subunit 1, N-terminally processed modification. Position 16 is a phosphoserine (S16). K202 carries the N6-acetyllysine modification.

The protein belongs to the ubiquitin-activating E1 family. Heterodimer of SAE1 and UBA2/SAE2. The heterodimer corresponds to the two domains that are encoded on a single polypeptide chain in ubiquitin-activating enzyme E1. Interacts with UBE2I. Broadly expressed, with highest levels in testis.

It localises to the nucleus. The protein operates within protein modification; protein sumoylation. The heterodimer acts as an E1 ligase for SUMO1, SUMO2, SUMO3, and probably SUMO4. It mediates ATP-dependent activation of SUMO proteins followed by formation of a thioester bond between a SUMO protein and a conserved active site cysteine residue on UBA2/SAE2. The chain is SUMO-activating enzyme subunit 1 (Sae1) from Mus musculus (Mouse).